Reading from the N-terminus, the 273-residue chain is Dermonecrotic toxin LsaSicTox-alphaIB1bii (273 aa).

The active site involves His-5. The Mg(2+) site is built by Glu-25 and Asp-27. The Nucleophile role is filled by His-41. 2 disulfides stabilise this stretch: Cys-45–Cys-51 and Cys-47–Cys-190. A Mg(2+)-binding site is contributed by Asp-85.

It belongs to the arthropod phospholipase D family. Class II subfamily. It depends on Mg(2+) as a cofactor. As to expression, expressed by the venom gland.

Its subcellular location is the secreted. The enzyme catalyses an N-(acyl)-sphingosylphosphocholine = an N-(acyl)-sphingosyl-1,3-cyclic phosphate + choline. It catalyses the reaction an N-(acyl)-sphingosylphosphoethanolamine = an N-(acyl)-sphingosyl-1,3-cyclic phosphate + ethanolamine. It carries out the reaction a 1-acyl-sn-glycero-3-phosphocholine = a 1-acyl-sn-glycero-2,3-cyclic phosphate + choline. The catalysed reaction is a 1-acyl-sn-glycero-3-phosphoethanolamine = a 1-acyl-sn-glycero-2,3-cyclic phosphate + ethanolamine. Dermonecrotic toxins cleave the phosphodiester linkage between the phosphate and headgroup of certain phospholipids (sphingolipid and lysolipid substrates), forming an alcohol (often choline) and a cyclic phosphate. This toxin acts on sphingomyelin (SM). It may also act on ceramide phosphoethanolamine (CPE), lysophosphatidylcholine (LPC) and lysophosphatidylethanolamine (LPE), but not on lysophosphatidylserine (LPS), and lysophosphatidylglycerol (LPG). It acts by transphosphatidylation, releasing exclusively cyclic phosphate products as second products. Induces dermonecrosis, hemolysis, increased vascular permeability, edema, inflammatory response, and platelet aggregation. This Loxosceles sabina (Tucson recluse spider) protein is Dermonecrotic toxin LsaSicTox-alphaIB1bii.